Consider the following 501-residue polypeptide: Phosphatase and actin regulator 1 (501 aa).

One copy of the RPEL 1 repeat lies at 1–18 (MRQSREELIKRGVLKEIF). Disordered regions lie at residues 21–46 (DGEL…QVLS) and 295–329 (DNKE…EDNS). Over residues 36-46 (GQPLGSGQVLS) the composition is skewed to low complexity. Residues 295–304 (DNKENVPHEA) are compositionally biased toward basic and acidic residues. Positions 317-328 (EEEEEEDEDEDN) are enriched in acidic residues. 3 RPEL repeats span residues 343–368 (DSLA…PMQT), 381–406 (TKLT…KPRN), and 419–444 (RRLT…IRFS). Residues 382–415 (KLTRRLSQRPTAEELEQRNILKPRNEQEEQEEKR) form a disordered region. The segment covering 392-415 (TAEELEQRNILKPRNEQEEQEEKR) has biased composition (basic and acidic residues).

The protein belongs to the phosphatase and actin regulator family. As to quaternary structure, interacts (via RPEL repeats) with ACTA1. In terms of tissue distribution, expressed in the gizzard, and in neurons from central and peripheral nervous systems.

It localises to the cytoplasm. The protein resides in the synapse. Its subcellular location is the nucleus. Its function is as follows. Binds actin monomers (G actin) and plays a role in the reorganization of the actin cytoskeleton and in formation of actin stress fibers. This Gallus gallus (Chicken) protein is Phosphatase and actin regulator 1 (PHACTR1).